Here is a 468-residue protein sequence, read N- to C-terminus: 3-isopropylmalate dehydratase large subunit 2 (468 aa).

Positions 349, 409, and 412 each coordinate [4Fe-4S] cluster.

It belongs to the aconitase/IPM isomerase family. LeuC type 1 subfamily. As to quaternary structure, heterodimer of LeuC and LeuD. [4Fe-4S] cluster serves as cofactor.

It carries out the reaction (2R,3S)-3-isopropylmalate = (2S)-2-isopropylmalate. Its pathway is amino-acid biosynthesis; L-leucine biosynthesis; L-leucine from 3-methyl-2-oxobutanoate: step 2/4. Its function is as follows. Catalyzes the isomerization between 2-isopropylmalate and 3-isopropylmalate, via the formation of 2-isopropylmaleate. This chain is 3-isopropylmalate dehydratase large subunit 2, found in Bradyrhizobium diazoefficiens (strain JCM 10833 / BCRC 13528 / IAM 13628 / NBRC 14792 / USDA 110).